Reading from the N-terminus, the 195-residue chain is Large ribosomal subunit protein eL18 (195 aa).

Residue Lys126 forms a Glycyl lysine isopeptide (Lys-Gly) (interchain with G-Cter in SUMO2) linkage. The residue at position 137 (Ser137) is a Phosphoserine. The tract at residues 158-195 is disordered; that stretch reads HFGKAPGTPHSHTKPYVRSKGRKFERARGRRASRGYKN. A Phosphothreonine modification is found at Thr165. Composition is skewed to basic residues over residues 168–178 and 185–195; these read SHTKPYVRSKG and RGRRASRGYKN. A Glycyl lysine isopeptide (Lys-Gly) (interchain with G-Cter in SUMO2) cross-link involves residue Lys171.

The protein belongs to the eukaryotic ribosomal protein eL18 family. As to quaternary structure, component of the large ribosomal subunit.

The protein localises to the cytoplasm. Its subcellular location is the cytosol. It is found in the rough endoplasmic reticulum. Functionally, component of the large ribosomal subunit. The chain is Large ribosomal subunit protein eL18 (RPL18) from Sus scrofa (Pig).